The primary structure comprises 294 residues: N-acetylmuramic acid 6-phosphate etherase (294 aa).

The SIS domain occupies V54–K217. Catalysis depends on E82, which acts as the Proton donor. The active site involves E113.

It belongs to the GCKR-like family. MurNAc-6-P etherase subfamily. As to quaternary structure, homodimer.

The enzyme catalyses N-acetyl-D-muramate 6-phosphate + H2O = N-acetyl-D-glucosamine 6-phosphate + (R)-lactate. It participates in amino-sugar metabolism; N-acetylmuramate degradation. Functionally, specifically catalyzes the cleavage of the D-lactyl ether substituent of MurNAc 6-phosphate, producing GlcNAc 6-phosphate and D-lactate. The sequence is that of N-acetylmuramic acid 6-phosphate etherase from Bacillus mycoides (strain KBAB4) (Bacillus weihenstephanensis).